A 216-amino-acid polypeptide reads, in one-letter code: 2-hydroxy-3-keto-5-methylthiopentenyl-1-phosphate phosphatase (216 aa).

The protein belongs to the HAD-like hydrolase superfamily. MtnX family.

It carries out the reaction 2-hydroxy-5-methylsulfanyl-3-oxopent-1-enyl phosphate + H2O = 1,2-dihydroxy-5-(methylsulfanyl)pent-1-en-3-one + phosphate. It functions in the pathway amino-acid biosynthesis; L-methionine biosynthesis via salvage pathway; L-methionine from S-methyl-5-thio-alpha-D-ribose 1-phosphate: step 4/6. Its function is as follows. Dephosphorylates 2-hydroxy-3-keto-5-methylthiopentenyl-1-phosphate (HK-MTPenyl-1-P) yielding 1,2-dihydroxy-3-keto-5-methylthiopentene (DHK-MTPene). This chain is 2-hydroxy-3-keto-5-methylthiopentenyl-1-phosphate phosphatase, found in Exiguobacterium sp. (strain ATCC BAA-1283 / AT1b).